We begin with the raw amino-acid sequence, 1044 residues long: Isoleucine--tRNA ligase (1044 aa).

Positions 48 to 58 match the 'HIGH' region motif; sequence PFATGLPHFGH. Positions 594-598 match the 'KMSKS' region motif; sequence KMSKS. Lysine 597 serves as a coordination point for ATP.

The protein belongs to the class-I aminoacyl-tRNA synthetase family. IleS type 2 subfamily. In terms of assembly, monomer. It depends on Zn(2+) as a cofactor.

The protein resides in the cytoplasm. The catalysed reaction is tRNA(Ile) + L-isoleucine + ATP = L-isoleucyl-tRNA(Ile) + AMP + diphosphate. Catalyzes the attachment of isoleucine to tRNA(Ile). As IleRS can inadvertently accommodate and process structurally similar amino acids such as valine, to avoid such errors it has two additional distinct tRNA(Ile)-dependent editing activities. One activity is designated as 'pretransfer' editing and involves the hydrolysis of activated Val-AMP. The other activity is designated 'posttransfer' editing and involves deacylation of mischarged Val-tRNA(Ile). The sequence is that of Isoleucine--tRNA ligase from Borrelia hermsii (strain HS1 / DAH).